We begin with the raw amino-acid sequence, 660 residues long: Oligopeptide-binding protein AliA (660 aa).

Residues 1-22 (MKSSKLFALAGVTLLAATTLAA) form the signal peptide. A lipid anchor (N-palmitoyl cysteine) is attached at Cys23. A lipid anchor (S-diacylglycerol cysteine) is attached at Cys23. The tract at residues 638–660 (EKWMKEKEESNKKAQEDLAKHVK) is disordered.

This sequence belongs to the bacterial solute-binding protein 5 family.

It is found in the cell membrane. Functionally, part of the binding-protein-dependent transport system for oligopeptides; probably an oligopeptide binding protein. This Streptococcus pneumoniae serotype 4 (strain ATCC BAA-334 / TIGR4) protein is Oligopeptide-binding protein AliA (aliA).